The primary structure comprises 115 residues: Replication initiation control protein YabA (115 aa).

Zn(2+)-binding residues include His90, Cys92, Cys106, and Cys109.

The protein belongs to the YabA family. Homotetramer. Interacts with both DnaA and DnaN, acting as a bridge between these two proteins. Zn(2+) serves as cofactor.

It is found in the cytoplasm. It localises to the nucleoid. Its function is as follows. Involved in control of chromosome replication initiation. Inhibits the cooperative binding of DnaA to the oriC region, thus negatively regulating initiation of chromosome replication. Inhibits the ability of DnaA-ATP to form a helix on DNA; does not disassemble preformed DnaA-DNA helices. Decreases the residence time of DnaA on the chromosome at its binding sites (oriC, replication forks and promoter-binding sites). Tethers DnaA to the replication machinery via the DNA polymerase beta sliding clamp subunit (dnaN). Associates with oriC and other DnaA targets on the chromosome in a DnaA-dependent manner. The sequence is that of Replication initiation control protein YabA from Staphylococcus aureus (strain JH1).